The sequence spans 313 residues: Fructose-1,6-bisphosphatase class 1 (313 aa).

Mg(2+)-binding residues include glutamate 91, aspartate 112, leucine 114, and aspartate 115. Residues 115–118 (DGSS), tyrosine 223, and lysine 254 contribute to the substrate site. Glutamate 260 is a binding site for Mg(2+).

The protein belongs to the FBPase class 1 family. In terms of assembly, homotetramer. Requires Mg(2+) as cofactor.

Its subcellular location is the cytoplasm. It catalyses the reaction beta-D-fructose 1,6-bisphosphate + H2O = beta-D-fructose 6-phosphate + phosphate. Its pathway is carbohydrate biosynthesis; gluconeogenesis. In Geobacter sulfurreducens (strain ATCC 51573 / DSM 12127 / PCA), this protein is Fructose-1,6-bisphosphatase class 1.